A 297-amino-acid chain; its full sequence is PAK4-inhibitor INKA2 (297 aa).

3 disordered regions span residues Gly-82–Arg-109, Leu-175–Leu-200, and Thr-234–Ser-285. Over residues Ser-92–Ser-102 the composition is skewed to low complexity. The interval Glu-137 to Glu-180 is inka box. Residues Arg-244–Leu-253 show a composition bias toward basic residues.

This sequence belongs to the INKA family. As to quaternary structure, interacts with PAK4.

The protein resides in the nucleus. In terms of biological role, inhibitor of the serine/threonine-protein kinase PAK4. Acts by binding PAK4 in a substrate-like manner, inhibiting the protein kinase activity. The sequence is that of PAK4-inhibitor INKA2 from Homo sapiens (Human).